A 402-amino-acid polypeptide reads, in one-letter code: Protein RETARDED ROOT GROWTH-LIKE (402 aa).

The chain crosses the membrane as a helical span at residues 375-395 (SATLEWLIIILISMEIAISFY).

This sequence belongs to the RMD1/sif2 family. As to expression, highly expressed in germinating seeds and developing seedlings. Also present at low levels in seedlings, roots, leaves, stems and flowers, and barely in siliques.

It is found in the mitochondrion membrane. The protein localises to the mitochondrion. In terms of biological role, mediates abscisic acid (ABA) signal transduction through mitochondrial retrograde regulation involving ABI4 during seed germination and seedling growth, and leading to the production of reactive oxygen species (ROS) by the alternative respiratory pathway. Required for the maintenance of mitochondrial structure. This chain is Protein RETARDED ROOT GROWTH-LIKE, found in Arabidopsis thaliana (Mouse-ear cress).